Here is a 207-residue protein sequence, read N- to C-terminus: Putative 3-methyladenine DNA glycosylase (207 aa).

It belongs to the DNA glycosylase MPG family.

The sequence is that of Putative 3-methyladenine DNA glycosylase from Burkholderia orbicola (strain MC0-3).